The chain runs to 386 residues: Putative 8-amino-7-oxononanoate synthase (386 aa).

Substrate is bound at residue R26. 113–114 (GY) is a pyridoxal 5'-phosphate binding site. H138 contacts substrate. Pyridoxal 5'-phosphate is bound by residues S186, 211 to 214 (DDAH), and 240 to 243 (TLSK). K243 carries the N6-(pyridoxal phosphate)lysine modification. T352 is a substrate binding site.

The protein belongs to the class-II pyridoxal-phosphate-dependent aminotransferase family. BioF subfamily. As to quaternary structure, homodimer. It depends on pyridoxal 5'-phosphate as a cofactor.

The catalysed reaction is 6-carboxyhexanoyl-[ACP] + L-alanine + H(+) = (8S)-8-amino-7-oxononanoate + holo-[ACP] + CO2. Its pathway is cofactor biosynthesis; biotin biosynthesis. Functionally, catalyzes the decarboxylative condensation of pimeloyl-[acyl-carrier protein] and L-alanine to produce 8-amino-7-oxononanoate (AON), [acyl-carrier protein], and carbon dioxide. The sequence is that of Putative 8-amino-7-oxononanoate synthase (bioF) from Phenylobacterium zucineum (strain HLK1).